A 481-amino-acid chain; its full sequence is Xylulose kinase (481 aa).

Residue Gln-81–His-82 participates in substrate binding. The active-site Proton acceptor is the Asp-239.

It belongs to the FGGY kinase family.

It carries out the reaction D-xylulose + ATP = D-xylulose 5-phosphate + ADP + H(+). Its function is as follows. Catalyzes the phosphorylation of D-xylulose to D-xylulose 5-phosphate. This chain is Xylulose kinase, found in Streptomyces coelicolor (strain ATCC BAA-471 / A3(2) / M145).